Reading from the N-terminus, the 107-residue chain is UPF0473 protein Ldb1604 (107 aa).

This sequence belongs to the UPF0473 family.

This chain is UPF0473 protein Ldb1604, found in Lactobacillus delbrueckii subsp. bulgaricus (strain ATCC 11842 / DSM 20081 / BCRC 10696 / JCM 1002 / NBRC 13953 / NCIMB 11778 / NCTC 12712 / WDCM 00102 / Lb 14).